The chain runs to 404 residues: Diphosphomevalonate decarboxylase mvd1 (404 aa).

(R)-5-diphosphomevalonate is bound by residues Y25–K28, R82, S161–R166, and T217.

Belongs to the diphosphomevalonate decarboxylase family. Homodimer.

It catalyses the reaction (R)-5-diphosphomevalonate + ATP = isopentenyl diphosphate + ADP + phosphate + CO2. The protein operates within isoprenoid biosynthesis; isopentenyl diphosphate biosynthesis via mevalonate pathway; isopentenyl diphosphate from (R)-mevalonate: step 3/3. Its function is as follows. Diphosphomevalonate decarboxylase; part of the second module of ergosterol biosynthesis pathway that includes the middle steps of the pathway. Mvd1 converts diphosphomevalonate into isopentenyl diphosphate. The second module is carried out in the vacuole and involves the formation of farnesyl diphosphate, which is also an important intermediate in the biosynthesis of ubiquinone, dolichol, heme and prenylated proteins. Activity by the mevalonate kinase erg12 (AFUA_4G07780) first converts mevalonate into 5-phosphomevalonate. 5-phosphomevalonate is then further converted to 5-diphosphomevalonate by the phosphomevalonate kinase erg8 (AFUA_5G10680). The diphosphomevalonate decarboxylase mvd1 (AFUA_4G07130) then produces isopentenyl diphosphate. The isopentenyl-diphosphate delta-isomerase idi1 (AFUA_6G11160) then catalyzes the 1,3-allylic rearrangement of the homoallylic substrate isopentenyl (IPP) to its highly electrophilic allylic isomer, dimethylallyl diphosphate (DMAPP). Finally the farnesyl diphosphate synthase erg20 (AFUA_5G02450) catalyzes the sequential condensation of isopentenyl pyrophosphate with dimethylallyl pyrophosphate, and then with the resultant geranylpyrophosphate to the ultimate product farnesyl pyrophosphate. The polypeptide is Diphosphomevalonate decarboxylase mvd1 (Aspergillus fumigatus (strain ATCC MYA-4609 / CBS 101355 / FGSC A1100 / Af293) (Neosartorya fumigata)).